The primary structure comprises 518 residues: ORC1-type DNA replication protein 7 (518 aa).

Residue 94–98 (TGKTA) coordinates ATP. Residues 165–196 (DDDPNALEIGGSPGDDRTGNESSEGSDVSDSF) form a disordered region. The segment covering 186–196 (SSEGSDVSDSF) has biased composition (low complexity). ATP-binding residues include Y318 and R330.

The protein belongs to the CDC6/cdc18 family.

In terms of biological role, involved in regulation of DNA replication. Required to initiate DNA replication of the circular chromosome at a nearby autonomously replicating sequence (ARS) oriC1. In Halobacterium salinarum (strain ATCC 700922 / JCM 11081 / NRC-1) (Halobacterium halobium), this protein is ORC1-type DNA replication protein 7 (orc7).